A 299-amino-acid polypeptide reads, in one-letter code: Tetrahydromethanopterin S-methyltransferase subunit E (299 aa).

6 helical membrane-spanning segments follow: residues 57–79 (AISGEPVSYGLYVAVAGTIAWAL), 89–111 (AIIVGAGVAAIVHGAYSVSAFLG), 132–154 (HIGPIVGHGFIAVFTMTLAAYLA), 164–183 (LPLVSLIFGITVGAIGSSTG), 227–246 (FCSRFGGPLTGLCFGLIIFL), and 261–283 (LVTKTSIALLVGLLVVAVAAVIN).

The protein belongs to the MtrE family. The complex is composed of 8 subunits; MtrA, MtrB, MtrC, MtrD, MtrE, MtrF, MtrG and MtrH.

The protein localises to the cell membrane. The catalysed reaction is 5-methyl-5,6,7,8-tetrahydromethanopterin + coenzyme M + 2 Na(+)(in) = 5,6,7,8-tetrahydromethanopterin + methyl-coenzyme M + 2 Na(+)(out). It functions in the pathway one-carbon metabolism; methanogenesis from CO(2); methyl-coenzyme M from 5,10-methylene-5,6,7,8-tetrahydromethanopterin: step 2/2. In terms of biological role, part of a complex that catalyzes the formation of methyl-coenzyme M and tetrahydromethanopterin from coenzyme M and methyl-tetrahydromethanopterin. This is an energy-conserving, sodium-ion translocating step. This is Tetrahydromethanopterin S-methyltransferase subunit E from Methanococcus maripaludis (strain DSM 14266 / JCM 13030 / NBRC 101832 / S2 / LL).